Consider the following 274-residue polypeptide: Large ribosomal subunit protein uL2cz/uL2cy (274 aa).

The interval 224–252 (NPVDHPHGGGEGRAPIGRKKPVTPWGYPA) is disordered.

Belongs to the universal ribosomal protein uL2 family. As to quaternary structure, part of the 50S ribosomal subunit.

The protein resides in the plastid. Its subcellular location is the chloroplast. This is Large ribosomal subunit protein uL2cz/uL2cy (rpl2-A) from Capsella bursa-pastoris (Shepherd's purse).